Here is a 241-residue protein sequence, read N- to C-terminus: Probable transcriptional regulatory protein H16_A0916 (241 aa).

This sequence belongs to the TACO1 family.

It localises to the cytoplasm. The sequence is that of Probable transcriptional regulatory protein H16_A0916 from Cupriavidus necator (strain ATCC 17699 / DSM 428 / KCTC 22496 / NCIMB 10442 / H16 / Stanier 337) (Ralstonia eutropha).